Reading from the N-terminus, the 388-residue chain is Succinate--CoA ligase [ADP-forming] subunit beta (388 aa).

The ATP-grasp domain maps to 9–244 (KQLFQKYGVP…LDEEDPFEIE (236 aa)). Residues Lys-46, 53–55 (GRG), Glu-99, Leu-102, and Glu-107 each bind ATP. Residues Asn-199 and Asp-213 each coordinate Mg(2+). Residues Asn-265 and 322–324 (GIL) contribute to the substrate site.

This sequence belongs to the succinate/malate CoA ligase beta subunit family. As to quaternary structure, heterotetramer of two alpha and two beta subunits. Mg(2+) is required as a cofactor.

It carries out the reaction succinate + ATP + CoA = succinyl-CoA + ADP + phosphate. It catalyses the reaction GTP + succinate + CoA = succinyl-CoA + GDP + phosphate. It functions in the pathway carbohydrate metabolism; tricarboxylic acid cycle; succinate from succinyl-CoA (ligase route): step 1/1. Succinyl-CoA synthetase functions in the citric acid cycle (TCA), coupling the hydrolysis of succinyl-CoA to the synthesis of either ATP or GTP and thus represents the only step of substrate-level phosphorylation in the TCA. The beta subunit provides nucleotide specificity of the enzyme and binds the substrate succinate, while the binding sites for coenzyme A and phosphate are found in the alpha subunit. This is Succinate--CoA ligase [ADP-forming] subunit beta from Syntrophobacter fumaroxidans (strain DSM 10017 / MPOB).